The following is a 292-amino-acid chain: 4-hydroxy-tetrahydrodipicolinate synthase (292 aa).

Residue threonine 45 coordinates pyruvate. Tyrosine 133 acts as the Proton donor/acceptor in catalysis. Lysine 161 acts as the Schiff-base intermediate with substrate in catalysis. Isoleucine 203 contributes to the pyruvate binding site.

The protein belongs to the DapA family. As to quaternary structure, homotetramer; dimer of dimers.

The protein localises to the cytoplasm. The catalysed reaction is L-aspartate 4-semialdehyde + pyruvate = (2S,4S)-4-hydroxy-2,3,4,5-tetrahydrodipicolinate + H2O + H(+). Its pathway is amino-acid biosynthesis; L-lysine biosynthesis via DAP pathway; (S)-tetrahydrodipicolinate from L-aspartate: step 3/4. Catalyzes the condensation of (S)-aspartate-beta-semialdehyde [(S)-ASA] and pyruvate to 4-hydroxy-tetrahydrodipicolinate (HTPA). This chain is 4-hydroxy-tetrahydrodipicolinate synthase, found in Nitrosococcus oceani (strain ATCC 19707 / BCRC 17464 / JCM 30415 / NCIMB 11848 / C-107).